The chain runs to 157 residues: Protein-export protein SecB (157 aa).

It belongs to the SecB family. Homotetramer, a dimer of dimers. One homotetramer interacts with 1 SecA dimer.

It is found in the cytoplasm. Functionally, one of the proteins required for the normal export of preproteins out of the cell cytoplasm. It is a molecular chaperone that binds to a subset of precursor proteins, maintaining them in a translocation-competent state. It also specifically binds to its receptor SecA. This is Protein-export protein SecB from Methylobacillus flagellatus (strain ATCC 51484 / DSM 6875 / VKM B-1610 / KT).